A 287-amino-acid polypeptide reads, in one-letter code: Bifunctional protein FolD (287 aa).

Residues 160-162 (GRS), serine 189, and isoleucine 230 contribute to the NADP(+) site.

This sequence belongs to the tetrahydrofolate dehydrogenase/cyclohydrolase family. In terms of assembly, homodimer.

It catalyses the reaction (6R)-5,10-methylene-5,6,7,8-tetrahydrofolate + NADP(+) = (6R)-5,10-methenyltetrahydrofolate + NADPH. The enzyme catalyses (6R)-5,10-methenyltetrahydrofolate + H2O = (6R)-10-formyltetrahydrofolate + H(+). It participates in one-carbon metabolism; tetrahydrofolate interconversion. Catalyzes the oxidation of 5,10-methylenetetrahydrofolate to 5,10-methenyltetrahydrofolate and then the hydrolysis of 5,10-methenyltetrahydrofolate to 10-formyltetrahydrofolate. This is Bifunctional protein FolD from Chlamydia felis (strain Fe/C-56) (Chlamydophila felis).